Reading from the N-terminus, the 79-residue chain is Small ribosomal subunit protein bS16 (79 aa).

It belongs to the bacterial ribosomal protein bS16 family.

This is Small ribosomal subunit protein bS16 from Buchnera aphidicola subsp. Acyrthosiphon pisum (strain 5A).